The following is a 444-amino-acid chain: C4-dicarboxylate transport protein (444 aa).

A run of 8 helical transmembrane segments spans residues 19–39, 55–75, 90–110, 161–181, 199–219, 230–250, 343–363, and 366–386; these read HLYF…HFYP, LVKM…IAGM, IYFL…SNIL, ILQV…VGDL, LVAI…AFTI, LAFL…VVLG, LLLV…AGFI, and AATL…ILGI.

The protein belongs to the dicarboxylate/amino acid:cation symporter (DAACS) (TC 2.A.23) family.

The protein resides in the cell inner membrane. In terms of biological role, responsible for the transport of dicarboxylates such as succinate, fumarate, and malate from the periplasm across the membrane. In Allorhizobium ampelinum (strain ATCC BAA-846 / DSM 112012 / S4) (Agrobacterium vitis (strain S4)), this protein is C4-dicarboxylate transport protein.